The sequence spans 211 residues: Protein-L-isoaspartate O-methyltransferase (211 aa).

The active site involves Ser60.

This sequence belongs to the methyltransferase superfamily. L-isoaspartyl/D-aspartyl protein methyltransferase family.

The protein localises to the cytoplasm. It carries out the reaction [protein]-L-isoaspartate + S-adenosyl-L-methionine = [protein]-L-isoaspartate alpha-methyl ester + S-adenosyl-L-homocysteine. Its function is as follows. Catalyzes the methyl esterification of L-isoaspartyl residues in peptides and proteins that result from spontaneous decomposition of normal L-aspartyl and L-asparaginyl residues. It plays a role in the repair and/or degradation of damaged proteins. The chain is Protein-L-isoaspartate O-methyltransferase from Pseudomonas aeruginosa (strain LESB58).